Reading from the N-terminus, the 122-residue chain is Small ribosomal subunit protein uS13 (122 aa).

The segment at 99 to 122 (RGQRTHTNARTRKGPAKAIAGKKK) is disordered.

Belongs to the universal ribosomal protein uS13 family. As to quaternary structure, part of the 30S ribosomal subunit. Forms a loose heterodimer with protein S19. Forms two bridges to the 50S subunit in the 70S ribosome.

Its function is as follows. Located at the top of the head of the 30S subunit, it contacts several helices of the 16S rRNA. In the 70S ribosome it contacts the 23S rRNA (bridge B1a) and protein L5 of the 50S subunit (bridge B1b), connecting the 2 subunits; these bridges are implicated in subunit movement. Contacts the tRNAs in the A and P-sites. This is Small ribosomal subunit protein uS13 from Bradyrhizobium sp. (strain BTAi1 / ATCC BAA-1182).